The chain runs to 1138 residues: Lysylphosphatidylglycerol biosynthesis bifunctional protein LysX (1138 aa).

Residues 1 to 15 (MALDTPSSDLPVSTD) show a composition bias toward polar residues. A disordered region spans residues 1 to 34 (MALDTPSSDLPVSTDDTAEHQPTPAHRPPSAADR). The phosphatidylglycerol lysyltransferase stretch occupies residues 1–646 (MALDTPSSDL…LIAQLESEED (646 aa)). Transmembrane regions (helical) follow at residues 56-76 (IAGTVVGVLAGIALLSSIFPL), 92-112 (IVSLPNTSLAWAFVLALVAIA), 119-139 (IAWWIATIYLVLFMVSNALLL), 155-175 (IQIWIGLGIDAAALIFLIVTY), 190-210 (ALGVLIVGLTAATLVGWGLVW), and 247-267 (IVIDSALGLLGALALIAAATV). Positions 647–1138 (RTAVEVHRPE…AFPMVKPTDA (492 aa)) are lysine--tRNA ligase. A DNA-binding region (OB) is located at residues 698–772 (VTIAGRVTKM…GELSVLIDAW (75 aa)). Residues Asp1048 and Glu1055 each coordinate Mg(2+).

It in the N-terminal section; belongs to the LPG synthetase family. This sequence in the C-terminal section; belongs to the class-II aminoacyl-tRNA synthetase family. Mg(2+) serves as cofactor.

It is found in the cell membrane. It catalyses the reaction tRNA(Lys) + L-lysine + ATP = L-lysyl-tRNA(Lys) + AMP + diphosphate. The catalysed reaction is L-lysyl-tRNA(Lys) + a 1,2-diacyl-sn-glycero-3-phospho-(1'-sn-glycerol) = a 1,2-diacyl-sn-glycero-3-phospho-1'-(3'-O-L-lysyl)-sn-glycerol + tRNA(Lys). In terms of biological role, catalyzes the production of L-lysyl-tRNA(Lys)transfer and the transfer of a lysyl group from L-lysyl-tRNA(Lys) to membrane-bound phosphatidylglycerol (PG), which produces lysylphosphatidylglycerol (LPG), one of the components of the bacterial membrane with a positive net charge. LPG synthesis contributes to the resistance to cationic antimicrobial peptides (CAMPs) and likely protects M.tuberculosis against the CAMPs produced by competiting microorganisms (bacteriocins). In fact, the modification of anionic phosphatidylglycerol with positively charged L-lysine results in repulsion of the peptides. The chain is Lysylphosphatidylglycerol biosynthesis bifunctional protein LysX (lysX) from Gordonia bronchialis (strain ATCC 25592 / DSM 43247 / BCRC 13721 / JCM 3198 / KCTC 3076 / NBRC 16047 / NCTC 10667) (Rhodococcus bronchialis).